A 193-amino-acid polypeptide reads, in one-letter code: Phosphoheptose isomerase (193 aa).

The 157-residue stretch at 37-193 (LADSFKAGGK…QLIEKEMVKA (157 aa)) folds into the SIS domain. 52–54 (NGG) contributes to the substrate binding site. 2 residues coordinate Zn(2+): H61 and E65. Residues E65, 93–94 (ND), 119–121 (STS), S124, and Q172 contribute to the substrate site. Residues Q172 and H180 each contribute to the Zn(2+) site.

This sequence belongs to the SIS family. GmhA subfamily. As to quaternary structure, homotetramer. It depends on Zn(2+) as a cofactor.

It localises to the cytoplasm. The catalysed reaction is 2 D-sedoheptulose 7-phosphate = D-glycero-alpha-D-manno-heptose 7-phosphate + D-glycero-beta-D-manno-heptose 7-phosphate. The protein operates within carbohydrate biosynthesis; D-glycero-D-manno-heptose 7-phosphate biosynthesis; D-glycero-alpha-D-manno-heptose 7-phosphate and D-glycero-beta-D-manno-heptose 7-phosphate from sedoheptulose 7-phosphate: step 1/1. Functionally, catalyzes the isomerization of sedoheptulose 7-phosphate in D-glycero-D-manno-heptose 7-phosphate. The chain is Phosphoheptose isomerase from Serratia proteamaculans (strain 568).